The sequence spans 242 residues: Protein FsrB (242 aa).

Helical transmembrane passes span 29 to 49 (LTVY…SVLF), 52 to 72 (LSET…AGGW), 78 to 95 (WLCR…PFVL), 100 to 120 (VSLP…LFYW), and 160 to 180 (KIAS…LPVT).

It belongs to the AgrB family.

Its subcellular location is the cell membrane. Functionally, may be involved in the proteolytic processing of a quorum sensing system signal molecule precursor required for the regulation of the virulence genes for gelatinase (gelE) and a serine protease (sprE). In Enterococcus faecalis (strain ATCC 47077 / OG1RF), this protein is Protein FsrB (fsrB).